Consider the following 131-residue polypeptide: Heat shock protein 15 homolog (131 aa).

The S4 RNA-binding domain occupies 6 to 67 (VRLDKWLWAA…NEEKEIKIIA (62 aa)). Positions 98-131 (ARKNNSLSMPHPDRRPNKKERRDLLKFKHQDKFE) are disordered. The span at 108–131 (HPDRRPNKKERRDLLKFKHQDKFE) shows a compositional bias: basic and acidic residues.

The protein belongs to the HSP15 family.

Functionally, involved in the recycling of free 50S ribosomal subunits that still carry a nascent chain. Binds RNA more specifically than DNA. Binds with very high affinity to the free 50S ribosomal subunit. Does not bind it when it is part of the 70S ribosome. The sequence is that of Heat shock protein 15 homolog (hslR) from Haemophilus influenzae (strain ATCC 51907 / DSM 11121 / KW20 / Rd).